The chain runs to 157 residues: Succinate dehydrogenase [ubiquinone] cytochrome b small subunit, mitochondrial (157 aa).

Residues 1 to 45 (MAALVLLRAGLARPRGVPTALLRGTLLRHSAVLTAAADRSAPARQ) constitute a mitochondrion transit peptide. At 46–61 (SHGGAPQGHGSSKAAS) the chain is on the mitochondrial matrix side. A helical transmembrane segment spans residues 62-83 (LHWTSERAVSALLLGLLPAAYL). Residues 84 to 88 (YPGPA) lie on the Mitochondrial intermembrane side of the membrane. A helical membrane pass occupies residues 89 to 109 (VDYSLAAALTLHGHWGLGQVI). Heme b is bound at residue H100. Residues 110 to 118 (TDYVHGDTP) lie on the Mitochondrial matrix side of the membrane. Position 112 (Y112) interacts with a ubiquinone. A helical membrane pass occupies residues 119–140 (IKVANTGLYVLSAITFTGLCYF). Residues 141–157 (NYYDVGICKAVAMLWSI) lie on the Mitochondrial intermembrane side of the membrane.

Belongs to the CybS family. As to quaternary structure, component of complex II composed of four subunits: the flavoprotein (FP) SDHA, iron-sulfur protein (IP) SDHB, and a cytochrome b560 composed of SDHC and SDHD.

It is found in the mitochondrion inner membrane. It functions in the pathway carbohydrate metabolism; tricarboxylic acid cycle. In terms of biological role, membrane-anchoring subunit of succinate dehydrogenase (SDH) that is involved in complex II of the mitochondrial electron transport chain and is responsible for transferring electrons from succinate to ubiquinone (coenzyme Q). SDH also oxidizes malate to the non-canonical enol form of oxaloacetate, enol-oxaloacetate. Enol-oxaloacetate, which is a potent inhibitor of the succinate dehydrogenase activity, is further isomerized into keto-oxaloacetate. The polypeptide is Succinate dehydrogenase [ubiquinone] cytochrome b small subunit, mitochondrial (SDHD) (Gallus gallus (Chicken)).